Here is a 228-residue protein sequence, read N- to C-terminus: 7-cyano-7-deazaguanine synthase (228 aa).

Residue 7 to 17 coordinates ATP; the sequence is LSGGLDSSTAL. Residues C190, C202, C205, and C208 each coordinate Zn(2+).

This sequence belongs to the QueC family. Zn(2+) is required as a cofactor.

The catalysed reaction is 7-carboxy-7-deazaguanine + NH4(+) + ATP = 7-cyano-7-deazaguanine + ADP + phosphate + H2O + H(+). It participates in purine metabolism; 7-cyano-7-deazaguanine biosynthesis. Its function is as follows. Catalyzes the ATP-dependent conversion of 7-carboxy-7-deazaguanine (CDG) to 7-cyano-7-deazaguanine (preQ(0)). The chain is 7-cyano-7-deazaguanine synthase from Acaryochloris marina (strain MBIC 11017).